The chain runs to 1550 residues: Protein TIME FOR COFFEE (1550 aa).

Disordered regions lie at residues 1–191 (MDRN…PVSP), 207–304 (VPRK…PVAV), 325–505 (TSKQ…SERG), 708–736 (QGSV…TAQR), 779–805 (RPPN…SATP), 859–1023 (FNGS…KAGV), 1086–1130 (ASLE…QSIA), 1163–1196 (ALPQ…SQQP), 1213–1296 (AASA…SVAA), and 1321–1435 (NSKP…PKHG). A compositionally biased stretch (basic and acidic residues) spans 43-80 (EAARLRDRGGSNKKDRDRERDRDRERERERDRERDRLN). Over residues 100-118 (DGGDDSSEESVNDDEEYDD) the composition is skewed to acidic residues. Low complexity predominate over residues 134–151 (SNNISAASFSSSLSNHHN). The span at 157–171 (LHHHHHSHNNNHQRK) shows a compositional bias: basic residues. Polar residues predominate over residues 241-250 (RQISSTSPAN). Residues 292-301 (KSSSSKLSSP) are compositionally biased toward low complexity. The span at 348 to 366 (RVSSPISNPQTLPQSSITL) shows a compositional bias: polar residues. A compositionally biased stretch (low complexity) spans 367–379 (AANSSSSNVSAIA). Over residues 409–432 (SKSQVPFSNQLKSSGSGEGNSSVL) the composition is skewed to polar residues. Composition is skewed to basic and acidic residues over residues 447–461 (DSEK…DETI) and 473–490 (SDGE…KFEI). Polar residues-rich tracts occupy residues 713 to 736 (GRSS…TAQR), 783 to 803 (SGIT…SASA), and 884 to 992 (LTGQ…NLGL). Residues 1112 to 1126 (SGGGAIGKTSGGNGG) show a composition bias toward gly residues. Residues 1164 to 1173 (LPQSSGSLPT) show a composition bias toward polar residues. The segment covering 1174–1195 (SHHQQLLQQQQQQHMQRSQSQQ) has biased composition (low complexity). Residues 1234–1253 (NMTTSPAGTTKFANANSGFP) show a composition bias toward polar residues. Positions 1254–1273 (QNLVQSSSNQVQSQQWKNNS) are enriched in low complexity. Composition is skewed to polar residues over residues 1274-1296 (PRTT…SVAA), 1321-1342 (NSKP…NHQA), and 1351-1360 (SPSTSSVSKN). A compositionally biased stretch (low complexity) spans 1361 to 1382 (ASGSPRTTASASSAANKGGQAS). Composition is skewed to polar residues over residues 1383-1397 (TTTH…NLQP) and 1405-1419 (GGRN…NPTT). A compositionally biased stretch (low complexity) spans 1420 to 1435 (SSGSKSQQQQQLPKHG).

Interacts with MYC2.

The protein localises to the nucleus. Functionally, regulator of normal clock function. Acts in the mid to late night. Contributes to the amplitude of circadian clocks. May act on the transcriptional induction of LATE ELONGATED HYPOCOTYL (LHY). Inhibits MYC2 protein accumulation, acting as a negative factor in the JA-signaling pathway. The chain is Protein TIME FOR COFFEE (TIC) from Arabidopsis thaliana (Mouse-ear cress).